The chain runs to 570 residues: 4-hydroxy-7-methoxy-3-oxo-3,4-dihydro-2H-1,4-benzoxazin-2-yl glucoside beta-D-glucosidase 1c, chloroplastic (570 aa).

A chloroplast-targeting transit peptide spans 1 to 50 (MALLAAATLNPTTHLSIRSRAGHNSENLWLRSAASSQKSKGRFCNLTVRA). A beta-D-glucoside-binding positions include glutamine 92, histidine 194, and 239–240 (NE). Glutamate 240 functions as the Proton donor in the catalytic mechanism. Cysteines 259 and 265 form a disulfide. A beta-D-glucoside contacts are provided by residues tyrosine 383, glutamate 456, tryptophan 504, 511–512 (EW), and phenylalanine 520. The active-site Nucleophile is the glutamate 456.

Belongs to the glycosyl hydrolase 1 family. As to quaternary structure, homo- and heterohexamers. In terms of tissue distribution, expressed in young seedlings early after germination.

It is found in the plastid. Its subcellular location is the chloroplast. The enzyme catalyses Hydrolysis of terminal, non-reducing beta-D-glucosyl residues with release of beta-D-glucose.. The catalysed reaction is DIMBOA beta-D-glucoside + H2O = DIMBOA + D-glucose. It catalyses the reaction DIBOA beta-D-glucoside + H2O = DIBOA + D-glucose. Its function is as follows. Acts in defense of young plant parts against pests via the production of hydroxamic acids from hydroxamic acid glucosides. Enzymatic activity is highly correlated with plant growth. The preferred substrate is DIMBOA-beta-D-glucoside. The polypeptide is 4-hydroxy-7-methoxy-3-oxo-3,4-dihydro-2H-1,4-benzoxazin-2-yl glucoside beta-D-glucosidase 1c, chloroplastic (GLU1C) (Triticum aestivum (Wheat)).